We begin with the raw amino-acid sequence, 347 residues long: UDP-N-acetylenolpyruvoylglucosamine reductase (347 aa).

Positions 24-195 (FDARARVAAR…VAVTFRLPKA (172 aa)) constitute an FAD-binding PCMH-type domain. Residue R171 is part of the active site. Residue S247 is the Proton donor of the active site. The active site involves E343.

The protein belongs to the MurB family. FAD serves as cofactor.

The protein localises to the cytoplasm. It catalyses the reaction UDP-N-acetyl-alpha-D-muramate + NADP(+) = UDP-N-acetyl-3-O-(1-carboxyvinyl)-alpha-D-glucosamine + NADPH + H(+). It functions in the pathway cell wall biogenesis; peptidoglycan biosynthesis. In terms of biological role, cell wall formation. This chain is UDP-N-acetylenolpyruvoylglucosamine reductase, found in Burkholderia mallei (strain NCTC 10247).